The primary structure comprises 807 residues: Tyrosine-protein phosphatase non-receptor type 22 (807 aa).

The Tyrosine-protein phosphatase domain occupies 24 to 289 (FANEFLKLKR…ELVYNAVLEL (266 aa)). The residue at position 35 (Ser35) is a Phosphoserine; by PKC/PRKCD. Cys129 and Cys227 are disulfide-bonded. Cys227 (phosphocysteine intermediate) is an active-site residue. Substrate is bound by residues 227 to 233 (CSAGCGR) and Gln274. Residues Ser449, Ser635, Ser684, and Ser692 each carry the phosphoserine modification. Disordered regions lie at residues 676-700 (SVKLRSPKSELHQDRSSPPPPLPER) and 724-746 (SYPDTMENSTSSKQTLKTPGKSF).

It belongs to the protein-tyrosine phosphatase family. Non-receptor class 4 subfamily. Interacts with CSK. Interacts with LPXN. Interacts with CBL. Interacts with TRAF3 (via MATH domain); the interaction promotes TRAF3 polyubiquitination. Post-translationally, phosphorylation on Ser-35 by PKC/PRKCD abrogates its ability to dephosphorylate and inactivate the SRC family kinases. As to expression, expressed in bone marrow, B and T-cells, PBMCs, natural killer cells, monocytes, dendritic cells and neutrophils. Both isoform 1 and 4 are predominantly expressed in lymphoid tissues and cells. Isoform 1 is expressed in thymocytes and both mature B and T-cells.

Its subcellular location is the cytoplasm. It carries out the reaction O-phospho-L-tyrosyl-[protein] + H2O = L-tyrosyl-[protein] + phosphate. The enzyme catalyses N-(5Z,8Z,11Z,14Z-eicosatetraenoyl)-ethanolamine phosphate + H2O = N-(5Z,8Z,11Z,14Z-eicosatetraenoyl)-ethanolamine + phosphate. With respect to regulation, down-regulated by phosphorylation. In terms of biological role, acts as a negative regulator of T-cell receptor (TCR) signaling by direct dephosphorylation of the Src family kinases LCK and FYN, ITAMs of the TCRz/CD3 complex, as well as ZAP70, VAV, VCP and other key signaling molecules. Associates with and probably dephosphorylates CBL. Dephosphorylates LCK at its activating 'Tyr-394' residue. Dephosphorylates ZAP70 at its activating 'Tyr-493' residue. Dephosphorylates the immune system activator SKAP2. Positively regulates toll-like receptor (TLR)-induced type 1 interferon production. Promotes host antiviral responses mediated by type 1 interferon. Regulates NOD2-induced pro-inflammatory cytokine secretion and autophagy. Acts as an activator of NLRP3 inflammasome assembly by mediating dephosphorylation of 'Tyr-861' of NLRP3. Dephosphorylates phospho-anandamide (p-AEA), an endocannabinoid to anandamide (also called N-arachidonoylethanolamide). This is Tyrosine-protein phosphatase non-receptor type 22 (PTPN22) from Homo sapiens (Human).